The sequence spans 514 residues: MNIQEEIKKRRTFAIISHPDAGKTTITEQLLYFGGEIREAGTVKGKKTGTFAKSDWMDIEKQRGISVTSSVMQFDYDGKRVNXLDTPGHEDFSEDTYRTLMAVDAAVMVVDSAKGIEAQTXKLFEVVKHRGIPVFTFMNKLDRDGREPLDLLQELEEILGIASYPMNWPIGMGKAFEGLYDLYNQRLELYKGDERFASLEDGDKLFGSNPFYEQVKDDIELLNEAGNEFSEEAILAGELTPVFFGSALTNFGVQTFLETFLKFAPEPHGHKKTDGEIVDPYDKDFSGFVFKIQANMDPRHRDRIAFVRIVSGEFERGMSVNLPRTGKGAKLSNVTQFMAESRENVINAVAGDIIGVYDTGTYQVGDTLTVGKNKFEFEPLPTFTPEIFMKVSAKNVMKQKSFHKGIEQLVQEGAIQLYKNYQTGEYMLGAVGQLQFEVFKHRMEGEYNAEVVMNPMGKKTVRWIKPEDLDERMSSSRNXLAKDRFDQPVFLFENDFALRWFADKYPDVELEEKM.

A tr-type G domain is found at 8–268; it reads KKRRTFAIIS…TFLKFAPEPH (261 aa). GTP-binding positions include 17–24, 85–89, and 139–142; these read SHPDAGKT, DTPGH, and NKLD.

The protein belongs to the TRAFAC class translation factor GTPase superfamily. Classic translation factor GTPase family. PrfC subfamily.

It is found in the cytoplasm. Its function is as follows. Increases the formation of ribosomal termination complexes and stimulates activities of RF-1 and RF-2. It binds guanine nucleotides and has strong preference for UGA stop codons. It may interact directly with the ribosome. The stimulation of RF-1 and RF-2 is significantly reduced by GTP and GDP, but not by GMP. The protein is Peptide chain release factor 3 of Streptococcus pneumoniae serotype 19F (strain G54).